Consider the following 225-residue polypeptide: NAD(P)H-quinone oxidoreductase subunit K, chloroplastic (225 aa).

[4Fe-4S] cluster is bound by residues Cys-43, Cys-44, Cys-108, and Cys-139.

The protein belongs to the complex I 20 kDa subunit family. NDH is composed of at least 16 different subunits, 5 of which are encoded in the nucleus. It depends on [4Fe-4S] cluster as a cofactor.

It localises to the plastid. Its subcellular location is the chloroplast thylakoid membrane. The catalysed reaction is a plastoquinone + NADH + (n+1) H(+)(in) = a plastoquinol + NAD(+) + n H(+)(out). The enzyme catalyses a plastoquinone + NADPH + (n+1) H(+)(in) = a plastoquinol + NADP(+) + n H(+)(out). Functionally, NDH shuttles electrons from NAD(P)H:plastoquinone, via FMN and iron-sulfur (Fe-S) centers, to quinones in the photosynthetic chain and possibly in a chloroplast respiratory chain. The immediate electron acceptor for the enzyme in this species is believed to be plastoquinone. Couples the redox reaction to proton translocation, and thus conserves the redox energy in a proton gradient. This chain is NAD(P)H-quinone oxidoreductase subunit K, chloroplastic, found in Lemna minor (Common duckweed).